We begin with the raw amino-acid sequence, 427 residues long: Trigger factor (427 aa).

The PPIase FKBP-type domain occupies 163 to 248 (GDTVILDFEG…LHEIKTKEVP (86 aa)).

The protein belongs to the FKBP-type PPIase family. Tig subfamily.

It is found in the cytoplasm. The enzyme catalyses [protein]-peptidylproline (omega=180) = [protein]-peptidylproline (omega=0). Its function is as follows. Involved in protein export. Acts as a chaperone by maintaining the newly synthesized protein in an open conformation. Functions as a peptidyl-prolyl cis-trans isomerase. The polypeptide is Trigger factor (Listeria monocytogenes serotype 4b (strain CLIP80459)).